We begin with the raw amino-acid sequence, 142 residues long: Small heat shock protein IbpB (142 aa).

Positions 26–137 (TGESQSFPPY…APQRIAISER (112 aa)) constitute a sHSP domain.

The protein belongs to the small heat shock protein (HSP20) family. As to quaternary structure, homodimer. Forms homomultimers of about 100-150 subunits at optimal growth temperatures. Conformation changes to oligomers at high temperatures or high ionic concentrations. The decrease in size of the multimers is accompanied by an increase in chaperone activity.

The protein resides in the cytoplasm. Functionally, associates with aggregated proteins, together with IbpA, to stabilize and protect them from irreversible denaturation and extensive proteolysis during heat shock and oxidative stress. Aggregated proteins bound to the IbpAB complex are more efficiently refolded and reactivated by the ATP-dependent chaperone systems ClpB and DnaK/DnaJ/GrpE. Its activity is ATP-independent. The sequence is that of Small heat shock protein IbpB from Citrobacter koseri (strain ATCC BAA-895 / CDC 4225-83 / SGSC4696).